Here is a 342-residue protein sequence, read N- to C-terminus: Foldase protein PrsA (342 aa).

A signal peptide spans 1-20 (MKKKLILAAAGAMAVFSLAA). A lipid anchor (N-palmitoyl cysteine) is attached at Cys21. The S-diacylglycerol cysteine moiety is linked to residue Cys21. Residues 142–235 (HPEVEAQIIQ…QTYQTTYYVV (94 aa)) enclose the PpiC domain. The tract at residues 297-342 (MQTESSSASSEKKESKSSDSKTSDTKTSDSEKATDSSSKTTESSSK) is disordered. Residues 306-330 (SEKKESKSSDSKTSDTKTSDSEKAT) show a composition bias toward basic and acidic residues. Low complexity predominate over residues 331 to 342 (DSSSKTTESSSK).

This sequence belongs to the PrsA family.

Its subcellular location is the cell membrane. The catalysed reaction is [protein]-peptidylproline (omega=180) = [protein]-peptidylproline (omega=0). Functionally, plays a major role in protein secretion by helping the post-translocational extracellular folding of several secreted proteins. The sequence is that of Foldase protein PrsA from Enterococcus faecalis (strain ATCC 700802 / V583).